We begin with the raw amino-acid sequence, 55 residues long: Large ribosomal subunit protein bL33 (55 aa).

This sequence belongs to the bacterial ribosomal protein bL33 family.

The polypeptide is Large ribosomal subunit protein bL33 (Enterobacter sp. (strain 638)).